Consider the following 1409-residue polypeptide: MKKTVFRLNFLTACVSLGIASQAWAGHTYFGIDYQYYRDFAENKGKFTVGAKNIEVYNKEGQLVGTSMTKAPMIDFSVVSRNGVAALVGDQYIVSVAHNGGYNDVDFGAEGRNPDQHRFTYQIVKRNNYQAWERKHPYDGDYHMPRLHKFVTEAEPVGMTTNMDGKVYADRENYPERVRIGSGRQYWRTDKDEETNVHSSYYVSGAYRYLTAGNTHTQSGNGNGTVNLSGNVVSPNHYGPLPTGGSKGDSGSPMFIYDAKKKQWLINAVLQTGHPFFGRGNGFQLIREEWFYNEVLAVDTPSVFQRYIPPINGHYSFVSNNDGTGKLTLTRPSKDGSKAKSEVGTVKLFNPSLNQTAKEHVKAAAGYNIYQPRMEYGKNIYLGDQGKGTLTIENNINQGAGGLYFEGNFVVKGKQNNITWQGAGVSIGQDATVEWKVHNPENDRLSKIGIGTLLVNGKGKNLGSLSAGNGKVILDQQADEAGQKQAFKEVGIVSGRATVQLNSTDQVDPNNIYFGFRGGRLDLNGHSLTFKRIQNTDEGAMIVNHNTTQVANITITGNESITAPSNKKNINKLDYSKEIAYNGWFGETDKNKHNGRLNLIYKPTTEDRTLLLSGGTNLKGDITQTKGKLFFSGRPTPHAYNHLDKRWSEMEGIPQGEIVWDYDWINRTFKAENFQIKGGSAVVSRNVSSIEGNWTVSNNANATFGVVPNQQNTICTRSDWTGLTTCKTVNLTDTKVINSIPITQINGSINLTNNATVNIHGLAKLNGNVTLIDHSQFTLSNNATQTGNIKLSNHANATVNNATLNGNVHLTDSAQFSLKNSHFWHQIQGDKDTTVTLENATWTMPSDTTLQNLTLNNSTVTLNSAYSASSNNAPRHRRSLETETTPTSAEHRFNTLTVNGKLSGQGTFQFTSSLFGYKSDKLKLSNDAEGDYTLSVRNTGKEPVTLEQLTLIESLDNKPLSDKLKFTLENDHVDAGALRYKLVKNKGEFRLHNPIKEQELLNDLVRAEQAEQTLEAKQVEQTAEKQKSKAKARSRRAVLSDTPSAQSLLNALEAKQVEQTTETQTSKPKTKKGRSKRALSAAFSDTPFDLSQLKVFEVKLEVINAQPQVKKEPQDQEEQGKQKELISRYSNSALSELSATVNSMFSVQDELDRLFVDQAQSALWTNIAQDKRRYDSDAFRAYQQKTNLRQIGVQKALDNGRIGAVFSHSRSDNTFDEQVKNHATLTMMSGFAQYQWGDLQFGVNVGAGISASKMAEEQSRKIHRKAINYGVNASYQFRLGQLGIQPYLGVNRYFIERENYQSEEVKVQTPSLAFNRYNAGIRVDYTFTPTNNISVKPYFFVNYVDVSNANVQTTVNSTMLQQSFGRYWQKEVGLKAEILHFQLSAFISKSQGSQLGKQQNVGVKLGYRW.

An N-terminal signal peptide occupies residues 1–25 (MKKTVFRLNFLTACVSLGIASQAWA). The region spanning 26-294 (GHTYFGIDYQ…LIREEWFYNE (269 aa)) is the Peptidase S6 domain. Residue Ser250 is part of the active site. Disordered regions lie at residues 866-888 (YSASSNNAPRHRRSLETETTPTS) and 1016-1078 (AKQV…SKRA). Over residues 1057-1067 (VEQTTETQTSK) the composition is skewed to polar residues. Residues 1068 to 1077 (PKTKKGRSKR) show a composition bias toward basic residues. Residues 1156–1409 (VDQAQSALWT…NVGVKLGYRW (254 aa)) enclose the Autotransporter domain.

Its subcellular location is the periplasm. It is found in the secreted. The protein resides in the cell surface. The protein localises to the cell outer membrane. Probable protease; promotes adherence and invasion by directly binding to a host cell structure. In Haemophilus influenzae (strain ATCC 51907 / DSM 11121 / KW20 / Rd), this protein is Adhesion and penetration protein autotransporter (hap).